The chain runs to 611 residues: Broad-specificity linear acyl-CoA dehydrogenase FadE5 (611 aa).

Residues 162-165, Ser-171, and Thr-198 each bind FAD; that span reads MVLT. Ser-171 contributes to the a 2,3-saturated acyl-CoA binding site. A 2,3-saturated acyl-CoA contacts are provided by residues 224–225 and Arg-301; that span reads TK. Arg-326 contributes to the FAD binding site. An a 2,3-saturated acyl-CoA-binding site is contributed by Lys-338. 420–424 contributes to the FAD binding site; it reads QTLGG. Glu-447 serves as a coordination point for a 2,3-saturated acyl-CoA. The active-site Proton acceptor is Glu-447. An FAD-binding site is contributed by Thr-449. A 2,3-saturated acyl-CoA contacts are provided by residues Asp-456 and 460 to 461; that span reads RK.

This sequence belongs to the acyl-CoA dehydrogenase family. In terms of assembly, homodimer. It depends on FAD as a cofactor.

The catalysed reaction is a long-chain 2,3-saturated fatty acyl-CoA + oxidized [electron-transfer flavoprotein] + H(+) = a long-chain (2E)-enoyl-CoA + reduced [electron-transfer flavoprotein]. The enzyme catalyses a medium-chain 2,3-saturated fatty acyl-CoA + oxidized [electron-transfer flavoprotein] + H(+) = a medium-chain (2E)-enoyl-CoA + reduced [electron-transfer flavoprotein]. It catalyses the reaction a short-chain 2,3-saturated fatty acyl-CoA + oxidized [electron-transfer flavoprotein] + H(+) = a short-chain (2E)-enoyl-CoA + reduced [electron-transfer flavoprotein]. It carries out the reaction octadecanoyl-CoA + oxidized [electron-transfer flavoprotein] + H(+) = (2E)-octadecenoyl-CoA + reduced [electron-transfer flavoprotein]. The catalysed reaction is oxidized [electron-transfer flavoprotein] + hexadecanoyl-CoA + H(+) = (2E)-hexadecenoyl-CoA + reduced [electron-transfer flavoprotein]. The enzyme catalyses dodecanoyl-CoA + oxidized [electron-transfer flavoprotein] + H(+) = (2E)-dodecenoyl-CoA + reduced [electron-transfer flavoprotein]. It catalyses the reaction decanoyl-CoA + oxidized [electron-transfer flavoprotein] + H(+) = (2E)-decenoyl-CoA + reduced [electron-transfer flavoprotein]. It carries out the reaction hexanoyl-CoA + oxidized [electron-transfer flavoprotein] + H(+) = (2E)-hexenoyl-CoA + reduced [electron-transfer flavoprotein]. The catalysed reaction is butanoyl-CoA + oxidized [electron-transfer flavoprotein] + H(+) = (2E)-butenoyl-CoA + reduced [electron-transfer flavoprotein]. The protein operates within lipid metabolism; fatty acid metabolism. Its function is as follows. Acyl-CoA dehydrogenase that exhibits broad specificity for linear acyl-CoA substrates, with a preference for long-chain substrates. The polypeptide is Broad-specificity linear acyl-CoA dehydrogenase FadE5 (Mycobacterium tuberculosis (strain ATCC 25618 / H37Rv)).